We begin with the raw amino-acid sequence, 426 residues long: Adenylosuccinate synthetase (426 aa).

Residues 13–19 (GDEGKGK) and 41–43 (GHT) contribute to the GTP site. The active-site Proton acceptor is the aspartate 14. Aspartate 14 and glycine 41 together coordinate Mg(2+). Residues 14–17 (DEGK), 39–42 (NAGH), threonine 129, arginine 143, glutamine 224, threonine 239, and arginine 303 each bind IMP. The active-site Proton donor is histidine 42. A substrate-binding site is contributed by 299–305 (TTTGRPR). Residues arginine 305, 331-333 (KLD), and 414-416 (GTG) each bind GTP.

This sequence belongs to the adenylosuccinate synthetase family. As to quaternary structure, homodimer. It depends on Mg(2+) as a cofactor.

Its subcellular location is the cytoplasm. It catalyses the reaction IMP + L-aspartate + GTP = N(6)-(1,2-dicarboxyethyl)-AMP + GDP + phosphate + 2 H(+). It functions in the pathway purine metabolism; AMP biosynthesis via de novo pathway; AMP from IMP: step 1/2. In terms of biological role, plays an important role in the de novo pathway of purine nucleotide biosynthesis. Catalyzes the first committed step in the biosynthesis of AMP from IMP. The chain is Adenylosuccinate synthetase from Caldicellulosiruptor bescii (strain ATCC BAA-1888 / DSM 6725 / KCTC 15123 / Z-1320) (Anaerocellum thermophilum).